Consider the following 127-residue polypeptide: Large ribosomal subunit protein bL12 (127 aa).

This sequence belongs to the bacterial ribosomal protein bL12 family. In terms of assembly, homodimer. Part of the ribosomal stalk of the 50S ribosomal subunit. Forms a multimeric L10(L12)X complex, where L10 forms an elongated spine to which 2 to 4 L12 dimers bind in a sequential fashion. Binds GTP-bound translation factors.

Functionally, forms part of the ribosomal stalk which helps the ribosome interact with GTP-bound translation factors. Is thus essential for accurate translation. In Desulforapulum autotrophicum (strain ATCC 43914 / DSM 3382 / VKM B-1955 / HRM2) (Desulfobacterium autotrophicum), this protein is Large ribosomal subunit protein bL12.